We begin with the raw amino-acid sequence, 90 residues long: Small ribosomal subunit protein uS15 (90 aa).

It belongs to the universal ribosomal protein uS15 family. In terms of assembly, part of the 30S ribosomal subunit. Forms a bridge to the 50S subunit in the 70S ribosome, contacting the 23S rRNA.

Its function is as follows. One of the primary rRNA binding proteins, it binds directly to 16S rRNA where it helps nucleate assembly of the platform of the 30S subunit by binding and bridging several RNA helices of the 16S rRNA. Functionally, forms an intersubunit bridge (bridge B4) with the 23S rRNA of the 50S subunit in the ribosome. In Helicobacter hepaticus (strain ATCC 51449 / 3B1), this protein is Small ribosomal subunit protein uS15.